We begin with the raw amino-acid sequence, 551 residues long: Gliomedin (551 aa).

At Met-1–Arg-17 the chain is on the cytoplasmic side. The chain crosses the membrane as a helical; Signal-anchor for type II membrane protein span at residues Gly-18 to Cys-39. Over Gln-40–Gln-551 the chain is Extracellular. Positions Leu-72 to Glu-107 are disordered. A compositionally biased stretch (low complexity) spans Ala-79–Ala-90. An N-linked (GlcNAc...) asparagine glycan is attached at Asn-130. Collagen-like domains follow at residues Leu-137–Lys-195 and Gly-196–Val-222. Positions Gly-139–Asp-282 are disordered. Composition is skewed to basic and acidic residues over residues Glu-191–Glu-200 and Lys-213–Val-222. Residues Pro-237 to Pro-253 show a composition bias toward pro residues. The Olfactomedin-like domain occupies Gln-299–Ser-546. Residues Asn-329, Asn-357, Asn-378, and Asn-464 are each glycosylated (N-linked (GlcNAc...) asparagine).

As to quaternary structure, homotrimer (via collagen-like domains). Interacts with NRCAM and NFASC/neurofascin. Interaction with glial NRCAM enhances interaction with axonal NFASC. Interacts with MYOC. Post-translationally, N-glycosylated. In terms of processing, proteolytic processing by a furin-like protease causes shedding of the ectodomain. Further cleavage by BMP1 releases the olfactomedin-like domain. In terms of tissue distribution, specifically expressed in spinal cord, brain, placenta and sciatic nerve. More abundant in peripheral than central nervous system.

The protein resides in the cell membrane. Its subcellular location is the cell projection. It localises to the axon. The protein localises to the secreted. It is found in the extracellular space. The protein resides in the extracellular matrix. Functionally, ligand for NRCAM and NFASC/neurofascin that plays a role in the formation and maintenance of the nodes of Ranvier on myelinated axons. Mediates interaction between Schwann cell microvilli and axons via its interactions with NRCAM and NFASC. Nodes of Ranvier contain clustered sodium channels that are crucial for the saltatory propagation of action potentials along myelinated axons. During development, nodes of Ranvier are formed by the fusion of two heminodes. Required for normal clustering of sodium channels at heminodes; not required for the formation of mature nodes with normal sodium channel clusters. Required, together with NRCAM, for maintaining NFASC and sodium channel clusters at mature nodes of Ranvier. This is Gliomedin (GLDN) from Homo sapiens (Human).